The sequence spans 364 residues: Chorismate synthase (364 aa).

Arg48 lines the NADP(+) pocket. FMN contacts are provided by residues 131–133 (RSS), 243–244 (NA), Gly288, 303–307 (KPTSS), and Arg329.

It belongs to the chorismate synthase family. Homotetramer. FMNH2 serves as cofactor.

It catalyses the reaction 5-O-(1-carboxyvinyl)-3-phosphoshikimate = chorismate + phosphate. The protein operates within metabolic intermediate biosynthesis; chorismate biosynthesis; chorismate from D-erythrose 4-phosphate and phosphoenolpyruvate: step 7/7. In terms of biological role, catalyzes the anti-1,4-elimination of the C-3 phosphate and the C-6 proR hydrogen from 5-enolpyruvylshikimate-3-phosphate (EPSP) to yield chorismate, which is the branch point compound that serves as the starting substrate for the three terminal pathways of aromatic amino acid biosynthesis. This reaction introduces a second double bond into the aromatic ring system. The sequence is that of Chorismate synthase from Brucella melitensis biotype 2 (strain ATCC 23457).